Reading from the N-terminus, the 546-residue chain is Probable protein kinase UbiB (546 aa).

The Protein kinase domain maps to 124-502; the sequence is DFEIKPLASA…HVRQGQSRYF (379 aa). Residues 130–138 and K153 each bind ATP; that span reads LASASIAQV. The active-site Proton acceptor is D288. 2 helical membrane passes run 501–521 and 522–542; these read YFLG…VSRP and EWGL…FVGW.

The protein belongs to the ABC1 family. UbiB subfamily.

It is found in the cell inner membrane. It functions in the pathway cofactor biosynthesis; ubiquinone biosynthesis [regulation]. Functionally, is probably a protein kinase regulator of UbiI activity which is involved in aerobic coenzyme Q (ubiquinone) biosynthesis. The protein is Probable protein kinase UbiB of Shigella sonnei (strain Ss046).